Here is a 312-residue protein sequence, read N- to C-terminus: tRNA dimethylallyltransferase (312 aa).

Position 11 to 18 (11 to 18) interacts with ATP; that stretch reads GLTATGKT. 13 to 18 serves as a coordination point for substrate; it reads TATGKT. Positions 36 to 39 are interaction with substrate tRNA; sequence DSMC.

It belongs to the IPP transferase family. Monomer. Requires Mg(2+) as cofactor.

The enzyme catalyses adenosine(37) in tRNA + dimethylallyl diphosphate = N(6)-dimethylallyladenosine(37) in tRNA + diphosphate. Catalyzes the transfer of a dimethylallyl group onto the adenine at position 37 in tRNAs that read codons beginning with uridine, leading to the formation of N6-(dimethylallyl)adenosine (i(6)A). The protein is tRNA dimethylallyltransferase of Caldicellulosiruptor bescii (strain ATCC BAA-1888 / DSM 6725 / KCTC 15123 / Z-1320) (Anaerocellum thermophilum).